The chain runs to 659 residues: DNA mismatch repair protein MutL (659 aa).

The segment at G338–P459 is disordered. Residues S352 to A362 show a composition bias toward basic and acidic residues. Polar residues predominate over residues S374–P391.

This sequence belongs to the DNA mismatch repair MutL/HexB family.

Functionally, this protein is involved in the repair of mismatches in DNA. It is required for dam-dependent methyl-directed DNA mismatch repair. May act as a 'molecular matchmaker', a protein that promotes the formation of a stable complex between two or more DNA-binding proteins in an ATP-dependent manner without itself being part of a final effector complex. This chain is DNA mismatch repair protein MutL, found in Halobacterium salinarum (strain ATCC 29341 / DSM 671 / R1).